Reading from the N-terminus, the 219-residue chain is Large ribosomal subunit protein eL13 (219 aa).

A disordered region spans residues 198–219 (KDAAENPDDVTKAPTAVKRNKT).

This sequence belongs to the eukaryotic ribosomal protein eL13 family. Component of the 60S large ribosomal subunit (LSU).

The protein localises to the cytoplasm. Component of the ribosome, a large ribonucleoprotein complex responsible for the synthesis of proteins in the cell. The small ribosomal subunit (SSU) binds messenger RNAs (mRNAs) and translates the encoded message by selecting cognate aminoacyl-transfer RNA (tRNA) molecules. The large subunit (LSU) contains the ribosomal catalytic site termed the peptidyl transferase center (PTC), which catalyzes the formation of peptide bonds, thereby polymerizing the amino acids delivered by tRNAs into a polypeptide chain. The nascent polypeptides leave the ribosome through a tunnel in the LSU and interact with protein factors that function in enzymatic processing, targeting, and the membrane insertion of nascent chains at the exit of the ribosomal tunnel. As part of the LSU, it is probably required for its formation and the maturation of rRNAs. The protein is Large ribosomal subunit protein eL13 (RpL13) of Spodoptera frugiperda (Fall armyworm).